Consider the following 413-residue polypeptide: Hibernation-specific plasma protein HP-55 (413 aa).

The first 24 residues, 1-24 (MPSSISWGLLLLAALSCLGPGSLA), serve as a signal peptide directing secretion. Q25 bears the Pyrrolidone carboxylic acid mark. 4 N-linked (GlcNAc...) asparagine glycosylation sites follow: N65, N102, N165, and N266. The interval 368 to 387 (GGTVLGAEAMLQAPIMKFDR) is RCL.

This sequence belongs to the serpin family. As to quaternary structure, plasma proteins HP-20, HP-25, HP-27 and HP-55 form a 140 kDa complex via disulfide bonds in the plasma. Post-translationally, the N-terminus is blocked. Plasma; synthesized in the liver.

It localises to the secreted. Its function is as follows. Protease inhibitor. This Tamias sibiricus (Siberian chipmunk) protein is Hibernation-specific plasma protein HP-55.